Consider the following 253-residue polypeptide: Ribosomal RNA small subunit methyltransferase J (253 aa).

S-adenosyl-L-methionine contacts are provided by residues 123 to 124 and Asp-176; that span reads ER.

The protein belongs to the methyltransferase superfamily. RsmJ family.

Its subcellular location is the cytoplasm. It catalyses the reaction guanosine(1516) in 16S rRNA + S-adenosyl-L-methionine = N(2)-methylguanosine(1516) in 16S rRNA + S-adenosyl-L-homocysteine + H(+). Functionally, specifically methylates the guanosine in position 1516 of 16S rRNA. The chain is Ribosomal RNA small subunit methyltransferase J from Magnetococcus marinus (strain ATCC BAA-1437 / JCM 17883 / MC-1).